The primary structure comprises 90 residues: UPF0335 protein R02793 (90 aa).

The protein belongs to the UPF0335 family.

This is UPF0335 protein R02793 from Rhizobium meliloti (strain 1021) (Ensifer meliloti).